Here is a 233-residue protein sequence, read N- to C-terminus: Phosphatidylserine decarboxylase proenzyme (233 aa).

The active-site Schiff-base intermediate with substrate; via pyruvic acid is serine 201. The residue at position 201 (serine 201) is a Pyruvic acid (Ser); by autocatalysis.

This sequence belongs to the phosphatidylserine decarboxylase family. PSD-A subfamily. Heterodimer of a large membrane-associated beta subunit and a small pyruvoyl-containing alpha subunit. Requires pyruvate as cofactor. Post-translationally, is synthesized initially as an inactive proenzyme. Formation of the active enzyme involves a self-maturation process in which the active site pyruvoyl group is generated from an internal serine residue via an autocatalytic post-translational modification. Two non-identical subunits are generated from the proenzyme in this reaction, and the pyruvate is formed at the N-terminus of the alpha chain, which is derived from the carboxyl end of the proenzyme. The post-translation cleavage follows an unusual pathway, termed non-hydrolytic serinolysis, in which the side chain hydroxyl group of the serine supplies its oxygen atom to form the C-terminus of the beta chain, while the remainder of the serine residue undergoes an oxidative deamination to produce ammonia and the pyruvoyl prosthetic group on the alpha chain.

It localises to the cell membrane. It carries out the reaction a 1,2-diacyl-sn-glycero-3-phospho-L-serine + H(+) = a 1,2-diacyl-sn-glycero-3-phosphoethanolamine + CO2. Its pathway is phospholipid metabolism; phosphatidylethanolamine biosynthesis; phosphatidylethanolamine from CDP-diacylglycerol: step 2/2. Catalyzes the formation of phosphatidylethanolamine (PtdEtn) from phosphatidylserine (PtdSer). In Mycolicibacterium vanbaalenii (strain DSM 7251 / JCM 13017 / BCRC 16820 / KCTC 9966 / NRRL B-24157 / PYR-1) (Mycobacterium vanbaalenii), this protein is Phosphatidylserine decarboxylase proenzyme.